A 545-amino-acid chain; its full sequence is Threonine--tRNA ligase catalytic subunit (545 aa).

The interval 139 to 433 is catalytic; that stretch reads DHRLIGEKLD…LLEHFKGKLP (295 aa). Residues C231, H282, and H410 each contribute to the Zn(2+) site.

The protein belongs to the class-II aminoacyl-tRNA synthetase family. As to quaternary structure, homodimer. Probably interacts with its editing subunit. It depends on Zn(2+) as a cofactor.

The protein resides in the cytoplasm. The catalysed reaction is tRNA(Thr) + L-threonine + ATP = L-threonyl-tRNA(Thr) + AMP + diphosphate + H(+). Functionally, catalyzes the attachment of threonine to tRNA(Thr) in a two-step reaction: L-threonine is first activated by ATP to form Thr-AMP and then transferred to the acceptor end of tRNA(Thr). Also activates L-serine and transfers it to tRNA(Thr) but cannot deacylate incorrectly charged amino acid; unlike most archaea the editing function is found in a freestanding protein. This Saccharolobus islandicus (strain Y.G.57.14 / Yellowstone #1) (Sulfolobus islandicus) protein is Threonine--tRNA ligase catalytic subunit.